The chain runs to 387 residues: Protein-glutamate methylesterase/protein-glutamine glutaminase 1 (387 aa).

The 119-residue stretch at 18 to 136 (RVMVVDDSAV…EISGGTDFRH (119 aa)) folds into the Response regulatory domain. A 4-aspartylphosphate modification is found at D69. A CheB-type methylesterase domain is found at 190–387 (PAAEERPDII…AYVLRSANKR (198 aa)). Residues S204, H233, and D329 contribute to the active site.

Belongs to the CheB family. In terms of processing, phosphorylated by CheA. Phosphorylation of the N-terminal regulatory domain activates the methylesterase activity.

It localises to the cytoplasm. It carries out the reaction [protein]-L-glutamate 5-O-methyl ester + H2O = L-glutamyl-[protein] + methanol + H(+). The catalysed reaction is L-glutaminyl-[protein] + H2O = L-glutamyl-[protein] + NH4(+). Its function is as follows. Involved in chemotaxis. Part of a chemotaxis signal transduction system that modulates chemotaxis in response to various stimuli. Catalyzes the demethylation of specific methylglutamate residues introduced into the chemoreceptors (methyl-accepting chemotaxis proteins or MCP) by CheR. Also mediates the irreversible deamidation of specific glutamine residues to glutamic acid. The sequence is that of Protein-glutamate methylesterase/protein-glutamine glutaminase 1 from Rhodospirillum rubrum (strain ATCC 11170 / ATH 1.1.1 / DSM 467 / LMG 4362 / NCIMB 8255 / S1).